A 317-amino-acid polypeptide reads, in one-letter code: 4-hydroxy-3-methylbut-2-enyl diphosphate reductase (317 aa).

Cysteine 12 contacts [4Fe-4S] cluster. Positions 41 and 74 each coordinate (2E)-4-hydroxy-3-methylbut-2-enyl diphosphate. The dimethylallyl diphosphate site is built by histidine 41 and histidine 74. Residues histidine 41 and histidine 74 each coordinate isopentenyl diphosphate. Cysteine 97 is a [4Fe-4S] cluster binding site. Histidine 125 lines the (2E)-4-hydroxy-3-methylbut-2-enyl diphosphate pocket. Histidine 125 is a binding site for dimethylallyl diphosphate. Isopentenyl diphosphate is bound at residue histidine 125. Glutamate 127 functions as the Proton donor in the catalytic mechanism. (2E)-4-hydroxy-3-methylbut-2-enyl diphosphate is bound at residue threonine 168. Cysteine 198 is a binding site for [4Fe-4S] cluster. Positions 226, 227, 228, and 270 each coordinate (2E)-4-hydroxy-3-methylbut-2-enyl diphosphate. Residues serine 226, serine 227, asparagine 228, and serine 270 each coordinate dimethylallyl diphosphate. Isopentenyl diphosphate is bound by residues serine 226, serine 227, asparagine 228, and serine 270.

This sequence belongs to the IspH family. As to quaternary structure, homodimer. It depends on [4Fe-4S] cluster as a cofactor.

It catalyses the reaction isopentenyl diphosphate + 2 oxidized [2Fe-2S]-[ferredoxin] + H2O = (2E)-4-hydroxy-3-methylbut-2-enyl diphosphate + 2 reduced [2Fe-2S]-[ferredoxin] + 2 H(+). The catalysed reaction is dimethylallyl diphosphate + 2 oxidized [2Fe-2S]-[ferredoxin] + H2O = (2E)-4-hydroxy-3-methylbut-2-enyl diphosphate + 2 reduced [2Fe-2S]-[ferredoxin] + 2 H(+). The protein operates within isoprenoid biosynthesis; dimethylallyl diphosphate biosynthesis; dimethylallyl diphosphate from (2E)-4-hydroxy-3-methylbutenyl diphosphate: step 1/1. Its pathway is isoprenoid biosynthesis; isopentenyl diphosphate biosynthesis via DXP pathway; isopentenyl diphosphate from 1-deoxy-D-xylulose 5-phosphate: step 6/6. Functionally, catalyzes the conversion of 1-hydroxy-2-methyl-2-(E)-butenyl 4-diphosphate (HMBPP) into a mixture of isopentenyl diphosphate (IPP) and dimethylallyl diphosphate (DMAPP). Acts in the terminal step of the DOXP/MEP pathway for isoprenoid precursor biosynthesis. The sequence is that of 4-hydroxy-3-methylbut-2-enyl diphosphate reductase from Yersinia enterocolitica serotype O:8 / biotype 1B (strain NCTC 13174 / 8081).